A 319-amino-acid polypeptide reads, in one-letter code: Glucokinase (319 aa).

8-13 (GDIGGT) serves as a coordination point for ATP.

This sequence belongs to the bacterial glucokinase family.

The protein localises to the cytoplasm. It carries out the reaction D-glucose + ATP = D-glucose 6-phosphate + ADP + H(+). This is Glucokinase from Chromohalobacter salexigens (strain ATCC BAA-138 / DSM 3043 / CIP 106854 / NCIMB 13768 / 1H11).